The primary structure comprises 247 residues: tRNA pseudouridine synthase A (247 aa).

Asp-52 functions as the Nucleophile in the catalytic mechanism. Substrate is bound at residue Tyr-110.

It belongs to the tRNA pseudouridine synthase TruA family. In terms of assembly, homodimer.

The enzyme catalyses uridine(38/39/40) in tRNA = pseudouridine(38/39/40) in tRNA. In terms of biological role, formation of pseudouridine at positions 38, 39 and 40 in the anticodon stem and loop of transfer RNAs. The chain is tRNA pseudouridine synthase A from Geobacter sp. (strain M21).